A 139-amino-acid polypeptide reads, in one-letter code: Diuretic hormone 41 (139 aa).

The signal sequence occupies residues 1–20; the sequence is MMWWALWCAVVVAAGSGVAA. The propeptide occupies 21–79; that stretch reads APAPDSLSPLDMVQMDSSAPDDETLYAMSPMAARYSAGAPWLYLLADMPRDSQTGSGRV. I122 bears the Isoleucine amide mark.

It belongs to the sauvagine/corticotropin-releasing factor/urotensin I family. In terms of tissue distribution, expressed in corpora cardiaca (CC), corpora allata (CA), antennal lobe (AL) and gnathal ganglion (GNG) (at protein level). Expression in CC and CA detected in all animals, in GNG in most animals, expression in AL detected in few animals (at protein level).

It is found in the secreted. Regulation of fluid secretion. The chain is Diuretic hormone 41 from Agrotis ipsilon (Black cutworm moth).